We begin with the raw amino-acid sequence, 544 residues long: Ceramide glucosyltransferase (544 aa).

At 1-15 (MVQEELSLFRITTGY) the chain is on the lumenal side. The chain crosses the membrane as a helical span at residues 16–36 (FFLLWYIIILVAAYSGFFEIL). Residues 37 to 427 (FNFRNRPILH…LATLIEPTTE (391 aa)) lie on the Cytoplasmic side of the membrane. A short sequence motif (D1) is located at residue Asp-109. Asp-171 is a short sequence motif (D2). A short sequence motif (D3) is located at residue Asp-364. Asp-364 acts as the Proton acceptor in catalysis. The (Q/R)XXRW motif lies at 404–408 (RRVRW). The chain crosses the membrane as a helical span at residues 428-448 (SIICGIYGTYAISTVFFGTWF). At 449-451 (NKY) the chain is on the lumenal side. The chain crosses the membrane as a helical span at residues 452 to 472 (WFVMHMLIWMLTDYVQYHTLI). The Cytoplasmic segment spans residues 473-501 (NHTLDVKNITYLPNWLNESIPPKQRNCLQ). A helical transmembrane segment spans residues 502–522 (WGYIWILRELLALPIWIIAMI). Topologically, residues 523-544 (GHEIDWRGRPFRIKKDLTAEEM) are lumenal.

It belongs to the glycosyltransferase 2 family.

The protein localises to the golgi apparatus membrane. The catalysed reaction is an N-acylsphing-4-enine + UDP-alpha-D-glucose = a beta-D-glucosyl-(1&lt;-&gt;1')-N-acylsphing-4-enine + UDP + H(+). The protein operates within lipid metabolism; sphingolipid metabolism. Its function is as follows. Catalyzes the final step in the biosynthesis of the membrane lipid glucosylceramide (GluCer), the transfer of glucose to ceramide. Glucosylceramides play important roles in growth, differentiation and pathogenicity. The polypeptide is Ceramide glucosyltransferase (Candida albicans (strain SC5314 / ATCC MYA-2876) (Yeast)).